We begin with the raw amino-acid sequence, 1377 residues long: MKEIKDFERIKIKIASPDQIRNWSYGEVKKSETINYRTLRPEKDGLFCERIFGTTKEWECYCGKFKSVRYKGIICDRCNVEVTHFKVRRERMGHIELAAPVAHIWYYKYIPSRIGLLLDITASSLNSILYYEKYVVIEPGDTDLKKMQLLNEDEYIEARERYGMSFNASMGAEAIKTLLENLDLDELSSKLRIQMIDKDDKTDKKLLRRLEIIENFKISGNKPEWMIMEVLPVIPPEIRPMVQLDGGRFATSDLNDLYRRVINRNNRLRKLLLLNAPEIIVRNEKRMLQESVDSLFDNSHKRKVVKGSSSRPLKSLSDALKGKQGRFRQNLLGKRVDYSGRSVIVVGPELKLHQCGLPAKMALELFKPFVIRRLIESEAVFNIKRAKNLIEQEVDEVWQILDLVIKEHPILLNRAPTLHRLGIQAFEPVLVEGKAIKLHPLVCHAYNADFDGDQMAVHVPLTPAAQAESWALMLSTNNLLNPANGHPIVFPSQDIVLGLYYLTMEKKNVIGEGKKFLNFNNVILAINNRSLDYNASIYVKIDGEYKKTTAGRVIFNEALPKGIEFVNKTLSDLELQILISKVYVVHGSSTVIEMLDIIKELGFRYATKFGCTISMSDIIVPDEKRTYVERANKEIAKIQNDYAKGVITGEERYNNVVSVWLKTNEELTNKMMEILKKDRDGFNVIYMMADSGARGSRNQIRQLAGMRGLMAKTSGDIIELPIISNFKEGLSVIEFFISTNGARKGLADTALKTADAGYLTRRLVDIAQDVVVRIEDCGTINGIKVETVKNGEEILESLKEKAVGSYSIERIKNPITGEIVLDANEEISEAKIELLEKIGIEKLVIRSVLTCEAEHGVCQKCYGRDFSKNKPVNIGEAVGIIAAQSIGQPGTQLTMRTFHIGGVAQAGSEDDKISLKNAFILNGIEGFNVRVDNGILFTRKGTLKIINVFYEEKIKNIKEIKVLDSQRVIKGIPLFIDKKGSEILSSYIGYVKLRDDNFFIVSEEQEVSLKAGTKLEIEVGDYVESGKVIGTFDPFAEPIIAEVKGKIKFKDIILGTTLKEEINTETGNVEKRITDNVFESLDPRIFIIDSSGMEVASYVLPGDAYLQVEDGQSINIGDIIAKLSKGSEKTQDITGGLPRVNDLFETRIPKNLTEMAKVSGIVQFKSIQKGKRLINILDEYGVEHKHYIPAGKHLLVRDGDVVKAGDMLCDGRINPHDVLEILGGISLQEFLLAEIQDVYRKQGVSINDKHIGVIIKQMMKKVKIVAVGDTNFVYGQKVDKHTFYEQNRKVIKQGGEPAIASPILIGVTKTSLNIDSFISAASFQETTKVLTDASIAGKIDDLRGLKENVVIGHLIPTGTGMGLYKKIKVSENIDSEV.

The Zn(2+) site is built by C60, C62, C75, and C78. Positions 449, 451, and 453 each coordinate Mg(2+). 4 residues coordinate Zn(2+): C777, C851, C858, and C861.

This sequence belongs to the RNA polymerase beta' chain family. In terms of assembly, the RNAP catalytic core consists of 2 alpha, 1 beta, 1 beta' and 1 omega subunit. When a sigma factor is associated with the core the holoenzyme is formed, which can initiate transcription. It depends on Mg(2+) as a cofactor. Zn(2+) serves as cofactor.

It catalyses the reaction RNA(n) + a ribonucleoside 5'-triphosphate = RNA(n+1) + diphosphate. Its function is as follows. DNA-dependent RNA polymerase catalyzes the transcription of DNA into RNA using the four ribonucleoside triphosphates as substrates. This is DNA-directed RNA polymerase subunit beta' from Borreliella burgdorferi (strain ZS7) (Borrelia burgdorferi).